The sequence spans 489 residues: 3-octaprenyl-4-hydroxybenzoate carboxy-lyase (489 aa).

Asn-172 is a binding site for Mn(2+). Prenylated FMN-binding positions include Ile-175–Arg-177, Arg-189–Leu-191, and Arg-194–Gly-195. Residue Glu-238 participates in Mn(2+) binding. Residue Asp-287 is the Proton donor of the active site.

Belongs to the UbiD family. As to quaternary structure, homohexamer. It depends on prenylated FMN as a cofactor. The cofactor is Mn(2+).

It localises to the cell membrane. It carries out the reaction a 4-hydroxy-3-(all-trans-polyprenyl)benzoate + H(+) = a 2-(all-trans-polyprenyl)phenol + CO2. Its pathway is cofactor biosynthesis; ubiquinone biosynthesis. In terms of biological role, catalyzes the decarboxylation of 3-octaprenyl-4-hydroxy benzoate to 2-octaprenylphenol, an intermediate step in ubiquinone biosynthesis. The sequence is that of 3-octaprenyl-4-hydroxybenzoate carboxy-lyase from Psychromonas ingrahamii (strain DSM 17664 / CCUG 51855 / 37).